Reading from the N-terminus, the 938-residue chain is Protein translocase subunit SecA 1 (938 aa).

ATP is bound by residues Gln84, 102 to 106 (GEGKT), and Asp491. The disordered stretch occupies residues 865–938 (QTGGVATKER…QKTGRHAKRR (74 aa)). Basic and acidic residues predominate over residues 918 to 927 (TRKERREAAR).

The protein belongs to the SecA family. As to quaternary structure, monomer and homodimer. Part of the essential Sec protein translocation apparatus which comprises SecA, SecYEG and auxiliary proteins SecDF. Other proteins may also be involved.

It localises to the cell membrane. The protein resides in the cytoplasm. The catalysed reaction is ATP + H2O + cellular proteinSide 1 = ADP + phosphate + cellular proteinSide 2.. Functionally, part of the Sec protein translocase complex. Interacts with the SecYEG preprotein conducting channel. Has a central role in coupling the hydrolysis of ATP to the transfer of proteins into and across the cell membrane, serving as an ATP-driven molecular motor driving the stepwise translocation of polypeptide chains across the membrane. This is Protein translocase subunit SecA 1 from Mycolicibacterium vanbaalenii (strain DSM 7251 / JCM 13017 / BCRC 16820 / KCTC 9966 / NRRL B-24157 / PYR-1) (Mycobacterium vanbaalenii).